Reading from the N-terminus, the 1711-residue chain is Hybrid PKS-NRPS synthetase TAS1 (1711 aa).

Positions 43-397 (APLSKMQRAL…RNGLNSEHRV (355 aa)) are condensation (C) domain. Residues 506–907 (QQQATLRPEQ…TVLLYGRINN (402 aa)) form an adenylation (A) domain region. One can recognise a Carrier 1 domain in the interval 1043-1119 (LEWAAAKARI…SQVGLVQSRR (77 aa)). Position 1079 is an O-(pantetheine 4'-phosphoryl)serine (S1079). A compositionally biased stretch (polar residues) spans 1114 to 1127 (LVQSRRGSSGSPRT). The segment at 1114–1159 (LVQSRRGSSGSPRTVRSHARPQRKAKTPPRQARPETPESDYDQLPD) is disordered. The segment covering 1128 to 1140 (VRSHARPQRKAKT) has biased composition (basic residues). The region spanning 1159–1236 (DLRDDVQQSI…AQVELLGRFT (78 aa)) is the Carrier 2 domain. S1195 carries the post-translational modification O-(pantetheine 4'-phosphoryl)serine. Residues 1266–1683 (REQYAIVGMS…GSTAHVVLSA (418 aa)) enclose the Ketosynthase family 3 (KS3) domain. Catalysis depends on for beta-ketoacyl synthase activity residues C1429, H1565, and N1608.

It in the N-terminal section; belongs to the NRP synthetase family. It depends on pantetheine 4'-phosphate as a cofactor.

The catalysed reaction is acetoacetyl-CoA + L-isoleucine + ATP = tenuazonic acid + AMP + diphosphate + CoA + 2 H(+). Functionally, hybrid PKS-NRPS synthetase that mediates the biosynthesis of the toxin tenuazonic acid (TeA), an inhibitor of protein biosynthesis on ribosomes by suppressing the release of new protein. TAS1 alone is sufficient for TeA synthesis via the condensation of isoleucine (Ile) with acetoacetyl-CoA by the N-terminal NRPS module and subsequent cyclization conducted by the C-terminal KS domain. The polypeptide is Hybrid PKS-NRPS synthetase TAS1 (Botryobasidium botryosum (strain FD-172 SS1)).